The primary structure comprises 33 residues: Cytochrome b6-f complex subunit 8 (33 aa).

The helical transmembrane segment at 2–22 threads the bilayer; the sequence is LFTIAWASLAAVFSFSIAMVV.

This sequence belongs to the PetN family. In terms of assembly, the 4 large subunits of the cytochrome b6-f complex are cytochrome b6, subunit IV (17 kDa polypeptide, PetD), cytochrome f and the Rieske protein, while the 4 small subunits are PetG, PetL, PetM and PetN. The complex functions as a dimer.

The protein resides in the cellular thylakoid membrane. Its function is as follows. Component of the cytochrome b6-f complex, which mediates electron transfer between photosystem II (PSII) and photosystem I (PSI), cyclic electron flow around PSI, and state transitions. The protein is Cytochrome b6-f complex subunit 8 of Synechococcus sp. (strain CC9311).